Consider the following 339-residue polypeptide: DNA-directed RNA polymerase subunit alpha (339 aa).

Residues 1–235 are alpha N-terminal domain (alpha-NTD); it reads MVIQKNWQEL…DQLQIFVNFE (235 aa). An alpha C-terminal domain (alpha-CTD) region spans residues 251–339; the sequence is FNPALLKKVD…DLAKRFEEHY (89 aa).

Belongs to the RNA polymerase alpha chain family. In terms of assembly, homodimer. The RNAP catalytic core consists of 2 alpha, 1 beta, 1 beta' and 1 omega subunit. When a sigma factor is associated with the core the holoenzyme is formed, which can initiate transcription.

It catalyses the reaction RNA(n) + a ribonucleoside 5'-triphosphate = RNA(n+1) + diphosphate. DNA-dependent RNA polymerase catalyzes the transcription of DNA into RNA using the four ribonucleoside triphosphates as substrates. In Methylobacterium sp. (strain 4-46), this protein is DNA-directed RNA polymerase subunit alpha.